A 227-amino-acid polypeptide reads, in one-letter code: Probable methylthioribulose-1-phosphate dehydratase (227 aa).

A substrate-binding site is contributed by Cys-87. Zn(2+) contacts are provided by His-105 and His-107. The Proton donor/acceptor role is filled by Glu-129. Residue His-185 coordinates Zn(2+).

This sequence belongs to the aldolase class II family. MtnB subfamily. It depends on Zn(2+) as a cofactor.

Its subcellular location is the cytoplasm. The enzyme catalyses 5-(methylsulfanyl)-D-ribulose 1-phosphate = 5-methylsulfanyl-2,3-dioxopentyl phosphate + H2O. The protein operates within amino-acid biosynthesis; L-methionine biosynthesis via salvage pathway; L-methionine from S-methyl-5-thio-alpha-D-ribose 1-phosphate: step 2/6. In terms of biological role, catalyzes the dehydration of methylthioribulose-1-phosphate (MTRu-1-P) into 2,3-diketo-5-methylthiopentyl-1-phosphate (DK-MTP-1-P). The sequence is that of Probable methylthioribulose-1-phosphate dehydratase from Drosophila ananassae (Fruit fly).